The chain runs to 333 residues: DNA-directed RNA polymerase subunit alpha (333 aa).

The segment at 1 to 233 (MVREKIRVST…DLFIPFLHAE (233 aa)) is alpha N-terminal domain (alpha-NTD). Residues 267–333 (KEIALKSIFI…DFLEIEKHFA (67 aa)) are alpha C-terminal domain (alpha-CTD).

It belongs to the RNA polymerase alpha chain family. In plastids the minimal PEP RNA polymerase catalytic core is composed of four subunits: alpha, beta, beta', and beta''. When a (nuclear-encoded) sigma factor is associated with the core the holoenzyme is formed, which can initiate transcription.

It localises to the plastid. Its subcellular location is the chloroplast. The catalysed reaction is RNA(n) + a ribonucleoside 5'-triphosphate = RNA(n+1) + diphosphate. In terms of biological role, DNA-dependent RNA polymerase catalyzes the transcription of DNA into RNA using the four ribonucleoside triphosphates as substrates. In Glycine max (Soybean), this protein is DNA-directed RNA polymerase subunit alpha.